The sequence spans 114 residues: Probable 4-amino-4-deoxy-L-arabinose-phosphoundecaprenol flippase subunit ArnE (114 aa).

A run of 3 helical transmembrane segments spans residues 38–58 (LTLRWLAIAVVSLGLGMLLWL), 64–84 (LPLSVAYPMLSFNFVLVTLAA), and 94–114 (LRHWLGVAAIMFGILLMSWHL). The EamA domain occupies 43–112 (LAIAVVSLGL…IMFGILLMSW (70 aa)).

Belongs to the ArnE family. As to quaternary structure, heterodimer of ArnE and ArnF.

It is found in the cell inner membrane. Its pathway is bacterial outer membrane biogenesis; lipopolysaccharide biosynthesis. Functionally, translocates 4-amino-4-deoxy-L-arabinose-phosphoundecaprenol (alpha-L-Ara4N-phosphoundecaprenol) from the cytoplasmic to the periplasmic side of the inner membrane. This is Probable 4-amino-4-deoxy-L-arabinose-phosphoundecaprenol flippase subunit ArnE from Yersinia pestis bv. Antiqua (strain Antiqua).